The chain runs to 257 residues: Thiazole synthase (257 aa).

The active-site Schiff-base intermediate with DXP is the K96. Residues G157, 184-185 (AG), and 206-207 (NT) contribute to the 1-deoxy-D-xylulose 5-phosphate site.

This sequence belongs to the ThiG family. In terms of assembly, homotetramer. Forms heterodimers with either ThiH or ThiS.

It localises to the cytoplasm. The catalysed reaction is [ThiS sulfur-carrier protein]-C-terminal-Gly-aminoethanethioate + 2-iminoacetate + 1-deoxy-D-xylulose 5-phosphate = [ThiS sulfur-carrier protein]-C-terminal Gly-Gly + 2-[(2R,5Z)-2-carboxy-4-methylthiazol-5(2H)-ylidene]ethyl phosphate + 2 H2O + H(+). Its pathway is cofactor biosynthesis; thiamine diphosphate biosynthesis. In terms of biological role, catalyzes the rearrangement of 1-deoxy-D-xylulose 5-phosphate (DXP) to produce the thiazole phosphate moiety of thiamine. Sulfur is provided by the thiocarboxylate moiety of the carrier protein ThiS. In vitro, sulfur can be provided by H(2)S. This Rhizobium rhizogenes (strain K84 / ATCC BAA-868) (Agrobacterium radiobacter) protein is Thiazole synthase.